A 486-amino-acid chain; its full sequence is Inosine-5'-monophosphate dehydrogenase (486 aa).

2 CBS domains span residues 99–154 (IVED…LVKE) and 156–215 (MTKE…VRDE). Residues D247 and 294–296 (GIG) each bind NAD(+). G296 and G298 together coordinate K(+). An IMP-binding site is contributed by S299. C301 contributes to the K(+) binding site. Residue C301 is the Thioimidate intermediate of the active site. IMP contacts are provided by residues 334-336 (DGG), 357-358 (GN), and 381-385 (YRGMG). R397 (proton acceptor) is an active-site residue. Residue E412 participates in IMP binding. The K(+) site is built by E466, S467, and H468.

It belongs to the IMPDH/GMPR family. In terms of assembly, homotetramer. K(+) is required as a cofactor.

The enzyme catalyses IMP + NAD(+) + H2O = XMP + NADH + H(+). It functions in the pathway purine metabolism; XMP biosynthesis via de novo pathway; XMP from IMP: step 1/1. Its activity is regulated as follows. Mycophenolic acid (MPA) is a non-competitive inhibitor that prevents formation of the closed enzyme conformation by binding to the same site as the amobile flap. In contrast, mizoribine monophosphate (MZP) is a competitive inhibitor that induces the closed conformation. MPA is a potent inhibitor of mammalian IMPDHs but a poor inhibitor of the bacterial enzymes. MZP is a more potent inhibitor of bacterial IMPDH. Catalyzes the conversion of inosine 5'-phosphate (IMP) to xanthosine 5'-phosphate (XMP), the first committed and rate-limiting step in the de novo synthesis of guanine nucleotides, and therefore plays an important role in the regulation of cell growth. The sequence is that of Inosine-5'-monophosphate dehydrogenase from Pyrococcus horikoshii (strain ATCC 700860 / DSM 12428 / JCM 9974 / NBRC 100139 / OT-3).